Consider the following 275-residue polypeptide: Dermonecrotic toxin LspiSicTox-betaIE4i (275 aa).

Glu24 and Asp26 together coordinate Mg(2+). The Nucleophile role is filled by His40. Cystine bridges form between Cys44/Cys50 and Cys46/Cys188. Asp84 lines the Mg(2+) pocket.

The protein belongs to the arthropod phospholipase D family. Class II subfamily. Mg(2+) is required as a cofactor. Expressed by the venom gland.

The protein localises to the secreted. The catalysed reaction is an N-(acyl)-sphingosylphosphocholine = an N-(acyl)-sphingosyl-1,3-cyclic phosphate + choline. It catalyses the reaction an N-(acyl)-sphingosylphosphoethanolamine = an N-(acyl)-sphingosyl-1,3-cyclic phosphate + ethanolamine. The enzyme catalyses a 1-acyl-sn-glycero-3-phosphocholine = a 1-acyl-sn-glycero-2,3-cyclic phosphate + choline. It carries out the reaction a 1-acyl-sn-glycero-3-phosphoethanolamine = a 1-acyl-sn-glycero-2,3-cyclic phosphate + ethanolamine. Its function is as follows. Dermonecrotic toxins cleave the phosphodiester linkage between the phosphate and headgroup of certain phospholipids (sphingolipid and lysolipid substrates), forming an alcohol (often choline) and a cyclic phosphate. This toxin acts on sphingomyelin (SM). It may also act on ceramide phosphoethanolamine (CPE), lysophosphatidylcholine (LPC) and lysophosphatidylethanolamine (LPE), but not on lysophosphatidylserine (LPS), and lysophosphatidylglycerol (LPG). It acts by transphosphatidylation, releasing exclusively cyclic phosphate products as second products. Induces dermonecrosis, hemolysis, increased vascular permeability, edema, inflammatory response, and platelet aggregation. The chain is Dermonecrotic toxin LspiSicTox-betaIE4i from Loxosceles spinulosa (Recluse spider).